Consider the following 153-residue polypeptide: Cytochrome c-type biogenesis protein CcmE (153 aa).

At Met-1–Arg-7 the chain is on the cytoplasmic side. A helical; Signal-anchor for type II membrane protein membrane pass occupies residues Leu-8–Ala-28. Over Phe-29–Arg-153 the chain is Periplasmic. Residues His-120 and Tyr-124 each contribute to the heme site. Residues Ala-130–Arg-153 form a disordered region. The span at Gln-141 to Arg-153 shows a compositional bias: polar residues.

The protein belongs to the CcmE/CycJ family.

The protein localises to the cell inner membrane. Its function is as follows. Heme chaperone required for the biogenesis of c-type cytochromes. Transiently binds heme delivered by CcmC and transfers the heme to apo-cytochromes in a process facilitated by CcmF and CcmH. This is Cytochrome c-type biogenesis protein CcmE from Leptothrix cholodnii (strain ATCC 51168 / LMG 8142 / SP-6) (Leptothrix discophora (strain SP-6)).